A 712-amino-acid chain; its full sequence is UvrABC system protein B (712 aa).

The Helicase ATP-binding domain maps to 35-421; the sequence is RRVQAGEKDV…SDGAVEQIIR (387 aa). 48–55 contacts ATP; sequence GATGTGKS. The Beta-hairpin motif lies at 101–124; it reads YYDYYQPEAYVPQSDTYIEKDSSI. Residues 438–604 enclose the Helicase C-terminal domain; it reads QIDDLVHEIR…PLRKKINDIV (167 aa). The disordered stretch occupies residues 625–655; sequence TKEGKGAKAPVPALGGQKTGGAKAARGRAKE. Residues 667–702 form the UVR domain; that stretch reads AEQIEDLTTRMRAAAADLQFEIAARLRDEVSEMKKE.

This sequence belongs to the UvrB family. As to quaternary structure, forms a heterotetramer with UvrA during the search for lesions. Interacts with UvrC in an incision complex.

The protein resides in the cytoplasm. The UvrABC repair system catalyzes the recognition and processing of DNA lesions. A damage recognition complex composed of 2 UvrA and 2 UvrB subunits scans DNA for abnormalities. Upon binding of the UvrA(2)B(2) complex to a putative damaged site, the DNA wraps around one UvrB monomer. DNA wrap is dependent on ATP binding by UvrB and probably causes local melting of the DNA helix, facilitating insertion of UvrB beta-hairpin between the DNA strands. Then UvrB probes one DNA strand for the presence of a lesion. If a lesion is found the UvrA subunits dissociate and the UvrB-DNA preincision complex is formed. This complex is subsequently bound by UvrC and the second UvrB is released. If no lesion is found, the DNA wraps around the other UvrB subunit that will check the other stand for damage. This chain is UvrABC system protein B, found in Streptomyces coelicolor (strain ATCC BAA-471 / A3(2) / M145).